Here is a 632-residue protein sequence, read N- to C-terminus: Extracellular metalloproteinase 2 (632 aa).

The N-terminal stretch at 1 to 19 is a signal peptide; the sequence is MHGLLLAGLAAALPLGVAG. The propeptide occupies 20–244; it reads LPARQQSGLS…VHNVVDYVAS (225 aa). An N-linked (GlcNAc...) asparagine glycan is attached at Asn-270. His-429 is a Zn(2+) binding site. Residue Glu-430 is part of the active site. His-433 lines the Zn(2+) pocket.

Belongs to the peptidase M36 family. Requires Zn(2+) as cofactor.

Its subcellular location is the secreted. In terms of biological role, secreted metalloproteinase probably acting as a virulence factor. The polypeptide is Extracellular metalloproteinase 2 (MEP2) (Trichophyton rubrum (Athlete's foot fungus)).